A 353-amino-acid polypeptide reads, in one-letter code: Stomatin-like protein 2, mitochondrial (353 aa).

A mitochondrion-targeting transit peptide spans 1 to 28; it reads MLARAARGTGALLLRGSVQASGRVPRRA. Position 17 is a phosphoserine; by PKC/PRKCZ (Ser17). Tyr124 is subject to Phosphotyrosine. Lys145 is subject to N6-acetyllysine; alternate. Residue Lys145 is modified to N6-succinyllysine; alternate. A coiled-coil region spans residues 215–252; sequence INVAEGKKQAQILASEAEKAEQINQAAGEASAVLAKAK. N6-acetyllysine is present on Lys233. The disordered stretch occupies residues 324-353; sequence VPGAQNSSQSRRDVQATDTSIEELGRVKLS. Ser330 is modified (phosphoserine).

It belongs to the band 7/mec-2 family. As to quaternary structure, forms homooligomers. Interacts with MFN2; may form heterooligomers. Interacts with PHB1 and PHB2; recruits them to cardiolipin-enriched mitochondrial membranes and stabilizes them. Interacts with CACNA2D2.

It is found in the cell membrane. The protein localises to the mitochondrion. Its subcellular location is the mitochondrion inner membrane. The protein resides in the mitochondrion intermembrane space. It localises to the membrane raft. It is found in the cytoplasm. The protein localises to the cytoskeleton. Its function is as follows. Mitochondrial protein that probably regulates the biogenesis and the activity of mitochondria. Stimulates cardiolipin biosynthesis, binds cardiolipin-enriched membranes where it recruits and stabilizes some proteins including prohibitin and may therefore act in the organization of functional microdomains in mitochondrial membranes. Through regulation of the mitochondrial function may play a role into several biological processes including cell migration, cell proliferation, T-cell activation, calcium homeostasis and cellular response to stress. May play a role in calcium homeostasis through negative regulation of calcium efflux from mitochondria. Required for mitochondrial hyperfusion a pro-survival cellular response to stress which results in increased ATP production by mitochondria. May also regulate the organization of functional domains at the plasma membrane and play a role in T-cell activation through association with the T-cell receptor signaling complex and its regulation. This Mus musculus (Mouse) protein is Stomatin-like protein 2, mitochondrial (Stoml2).